We begin with the raw amino-acid sequence, 241 residues long: Serine protease 58 (241 aa).

The signal sequence occupies residues 1–17 (MKFILLWALLNLTVALA). A Peptidase S1 domain is found at 18 to 239 (FNPDYTVSST…YIPWIENVIQ (222 aa)). C41 and C57 form a disulfide bridge. Active-site charge relay system residues include H56 and D101. Cystine bridges form between C133–C201, C165–C180, and C191–C215. 2 N-linked (GlcNAc...) asparagine glycosylation sites follow: N156 and N173. S195 serves as the catalytic Charge relay system.

This sequence belongs to the peptidase S1 family.

Its subcellular location is the secreted. It catalyses the reaction Preferential cleavage: Arg-|-Xaa, Lys-|-Xaa.. The polypeptide is Serine protease 58 (PRSS58) (Homo sapiens (Human)).